The sequence spans 846 residues: Translation initiation factor IF-2 (846 aa).

Residues 94 to 263 (QRSPEEIQAE…HGFQNPTGPV (170 aa)) are disordered. The span at 96–135 (SPEEIQAEQKRELDERRAAENAARDKVEAEVRQRNEEQAR) shows a compositional bias: basic and acidic residues. Low complexity-rich tracts occupy residues 136 to 148 (RQAAGSAAAAPAP) and 158 to 176 (AAPVAAPAPVVADAPASED). Basic and acidic residues-rich tracts occupy residues 177-206 (AAARAAERKKDETRRNESRTRDDDRRRGEA) and 230-239 (TTDEESDGAR). Basic residues predominate over residues 240 to 253 (RGRGGKSKLKKRNQ). The region spanning 346–513 (SRAPVVTVMG…AVLLQAEILE (168 aa)) is the tr-type G domain. The G1 stretch occupies residues 355–362 (GHVDHGKT). Position 355 to 362 (355 to 362 (GHVDHGKT)) interacts with GTP. The interval 380-384 (GITQH) is G2. The interval 401–404 (DTPG) is G3. Residues 401 to 405 (DTPGH) and 455 to 458 (NKID) each bind GTP. The segment at 455 to 458 (NKID) is G4. Residues 491-493 (SAK) form a G5 region.

The protein belongs to the TRAFAC class translation factor GTPase superfamily. Classic translation factor GTPase family. IF-2 subfamily.

The protein localises to the cytoplasm. In terms of biological role, one of the essential components for the initiation of protein synthesis. Protects formylmethionyl-tRNA from spontaneous hydrolysis and promotes its binding to the 30S ribosomal subunits. Also involved in the hydrolysis of GTP during the formation of the 70S ribosomal complex. This Pseudomonas putida (strain ATCC 47054 / DSM 6125 / CFBP 8728 / NCIMB 11950 / KT2440) protein is Translation initiation factor IF-2.